The following is a 109-amino-acid chain: U4-lycotoxin-Ls1c (109 aa).

The first 22 residues, 1 to 22, serve as a signal peptide directing secretion; it reads MKVLVLFSVLFLTLFSYSSTEA. The propeptide occupies 23-44; the sequence is IDEFDSDAEDDMLSLMANEQVR. Residues 45–88 are knottin domain; it reads AKACTPRLHDCSHDRHSCCRGELFKDVCYCFYPEGEDITEVCSC. Cystine bridges form between C48–C63, C55–C72, C62–C88, and C74–C86. The tract at residues 89–108 is linear cationic cytotoxin domain; it reads QQPKSHKYIEKVVDKAKTVV.

The protein belongs to the neurotoxin 19 (CSTX) family. 05 (U4-Lctx) subfamily. As to expression, expressed by the venom gland.

It localises to the secreted. Enhances the high-affinity desensitization of human P2RX3 purinoceptors. The sequence is that of U4-lycotoxin-Ls1c from Lycosa singoriensis (Wolf spider).